The primary structure comprises 322 residues: Probable heme-iron transport system permease protein IsdF (322 aa).

9 helical membrane-spanning segments follow: residues 9–29 (LLFL…FVTG), 61–81 (ILIA…LQAA), 89–109 (ANII…MLFI), 114–134 (FYLP…IIVL), 143–163 (VSMI…LEIL), 179–199 (IWSD…LTLL), 233–253 (VFLA…GIIV), 267–287 (VLIP…DLLG), and 294–314 (LEIP…IYLI).

Belongs to the binding-protein-dependent transport system permease family. FecCD subfamily.

It localises to the cell membrane. Its function is as follows. Part of the binding-protein-dependent transport system for heme-iron. Responsible for the translocation of the substrate across the membrane. This Staphylococcus aureus (strain bovine RF122 / ET3-1) protein is Probable heme-iron transport system permease protein IsdF (isdF).